The primary structure comprises 278 residues: ADP-dependent (S)-NAD(P)H-hydrate dehydratase (278 aa).

Residues 5–272 (TTEIVSRTII…TRIPTYMHRF (268 aa)) form the YjeF C-terminal domain. Residues Ala-40, Gly-103, and His-152 each coordinate (6S)-NADPHX. Residue Gly-214 coordinates AMP. Asp-215 lines the (6S)-NADPHX pocket.

The protein belongs to the NnrD/CARKD family. In terms of assembly, homotetramer. The cofactor is Mg(2+).

The catalysed reaction is (6S)-NADHX + ADP = AMP + phosphate + NADH + H(+). It carries out the reaction (6S)-NADPHX + ADP = AMP + phosphate + NADPH + H(+). Catalyzes the dehydration of the S-form of NAD(P)HX at the expense of ADP, which is converted to AMP. Together with NAD(P)HX epimerase, which catalyzes the epimerization of the S- and R-forms, the enzyme allows the repair of both epimers of NAD(P)HX, a damaged form of NAD(P)H that is a result of enzymatic or heat-dependent hydration. The polypeptide is ADP-dependent (S)-NAD(P)H-hydrate dehydratase (Lactiplantibacillus plantarum (strain ATCC BAA-793 / NCIMB 8826 / WCFS1) (Lactobacillus plantarum)).